The chain runs to 374 residues: Putative F-box/kelch-repeat protein At4g39756 (374 aa).

Residues 17 to 63 (CPSFLSLPEEILVNCLARIPKSYYPKLSLVCKSFCSLILSMELYVER) enclose the F-box domain. Kelch repeat units follow at residues 135-180 (ELYA…VING), 181-227 (KIYV…GMAV), 231-278 (KIYV…RQSC), and 280-308 (WYDT…ILEV).

This Arabidopsis thaliana (Mouse-ear cress) protein is Putative F-box/kelch-repeat protein At4g39756.